A 155-amino-acid polypeptide reads, in one-letter code: Small ribosomal subunit protein uS7c (155 aa).

It belongs to the universal ribosomal protein uS7 family. As to quaternary structure, part of the 30S ribosomal subunit.

Its subcellular location is the plastid. It localises to the chloroplast. One of the primary rRNA binding proteins, it binds directly to 16S rRNA where it nucleates assembly of the head domain of the 30S subunit. The sequence is that of Small ribosomal subunit protein uS7c (rps7) from Silene latifolia (White campion).